The chain runs to 176 residues: Small ribosomal subunit protein bS6 (176 aa).

The interval 97–176 (DQYTPNDSPP…VEPVDTTSEE (80 aa)) is disordered. The segment covering 140 to 160 (AVETVEPPAEPAEPVEAVETV) has biased composition (low complexity). The span at 161–176 (DTTEETVEPVDTTSEE) shows a compositional bias: acidic residues.

It belongs to the bacterial ribosomal protein bS6 family.

Binds together with bS18 to 16S ribosomal RNA. This chain is Small ribosomal subunit protein bS6, found in Gloeothece citriformis (strain PCC 7424) (Cyanothece sp. (strain PCC 7424)).